Reading from the N-terminus, the 508-residue chain is Photosystem II CP47 reaction center protein (508 aa).

Transmembrane regions (helical) follow at residues 21 to 36 (SVHI…WAGS), 101 to 115 (IVFS…IWHW), 140 to 156 (GIHL…FGAF), 203 to 218 (IAAG…FHLS), 237 to 252 (VLSS…AFVV), and 457 to 472 (SFAL…HGAR).

This sequence belongs to the PsbB/PsbC family. PsbB subfamily. As to quaternary structure, PSII is composed of 1 copy each of membrane proteins PsbA, PsbB, PsbC, PsbD, PsbE, PsbF, PsbH, PsbI, PsbJ, PsbK, PsbL, PsbM, PsbT, PsbX, PsbY, PsbZ, Psb30/Ycf12, at least 3 peripheral proteins of the oxygen-evolving complex and a large number of cofactors. It forms dimeric complexes. The cofactor is Binds multiple chlorophylls. PSII binds additional chlorophylls, carotenoids and specific lipids..

It is found in the plastid. Its subcellular location is the chloroplast thylakoid membrane. In terms of biological role, one of the components of the core complex of photosystem II (PSII). It binds chlorophyll and helps catalyze the primary light-induced photochemical processes of PSII. PSII is a light-driven water:plastoquinone oxidoreductase, using light energy to abstract electrons from H(2)O, generating O(2) and a proton gradient subsequently used for ATP formation. The protein is Photosystem II CP47 reaction center protein of Barbarea verna (Land cress).